Reading from the N-terminus, the 1640-residue chain is Clathrin heavy chain 2 (1640 aa).

Position 2 is an N-acetylalanine (A2). The segment at 2–479 (AQILPVRFQE…TDPMLALSVY (478 aa)) is globular terminal domain. 7 WD40-like repeat regions span residues 24 to 67 (NIGF…RPIS), 68 to 107 (AESAIMNPASKVIALKAGKTLQIFNIEMKSKMKAHTMAEE), 108 to 149 (VIFW…TSLV), 150 to 195 (GCQV…QPIE), 196 to 257 (GHAA…PEAQ), 258 to 301 (NDFP…ISAD), and 302 to 330 (TIFVTAPHKPTSGIIGVNKKGQVLSVCVE). Residue S67 is modified to Phosphoserine. Y184 bears the Phosphotyrosine mark. T394 is modified (phosphothreonine). The tract at residues 449 to 465 (EKWLKEDKLECSEELGD) is binding site for the uncoating ATPase, involved in lattice disassembly. Residues 480–523 (LRANVPSKVIQCFAETGQFQKIVLYAKKVGYTPDWIFLLRGVMK) form a flexible linker region. Positions 524–634 (ISPEQGLQFS…QALEHYTDLY (111 aa)) are distal segment. The tract at residues 524 to 1640 (ISPEQGLQFS…PLVFDFDGHE (1117 aa)) is heavy chain arm. 7 CHCR repeats span residues 537 to 683 (VQDE…QLCV), 686 to 828 (ASKY…SEEV), 833 to 972 (IMAV…QLID), 979 to 1124 (LSET…VKEA), 1128 to 1269 (YIRG…FRFA), 1274 to 1420 (LHIV…LLIN), and 1423 to 1566 (LLVL…RECF). Y634 is modified (phosphotyrosine). Residues 639 to 1640 (AVVHTHLLNP…PLVFDFDGHE (1002 aa)) form a proximal segment region. Position 737 is an N6-succinyllysine (K737). At K856 the chain carries N6-acetyllysine. At Y899 the chain carries Phosphotyrosine. S1167 is subject to Phosphoserine. Phosphotyrosine is present on Y1206. Residues 1213–1522 (AAKLLYSNVS…YLYKGNNWWA (310 aa)) form an involved in binding clathrin light chain region. The residue at position 1229 (S1229) is a Phosphoserine. K1441 bears the N6-acetyllysine; alternate mark. An N6-succinyllysine; alternate modification is found at K1441. Phosphotyrosine occurs at positions 1477 and 1487. Residue S1494 is modified to Phosphoserine. The residue at position 1501 (K1501) is an N6-acetyllysine. Residues 1551 to 1640 (QKLLQWFLEE…PLVFDFDGHE (90 aa)) form a trimerization region.

Belongs to the clathrin heavy chain family. Clathrin triskelions, composed of 3 heavy chains and 3 light chains, are the basic subunits of the clathrin coat. In the presence of light chains, hub assembly is influenced by both the pH and the concentration of calcium. May interact with OCRL. Interacts with AFTPH/aftiphilin. In terms of tissue distribution, maximal levels in skeletal muscle. High levels in heart and testis. Low expression detected in all other tissues.

Its subcellular location is the cytoplasmic vesicle membrane. The protein localises to the membrane. It localises to the coated pit. Clathrin is the major protein of the polyhedral coat of coated pits and vesicles. Two different adapter protein complexes link the clathrin lattice either to the plasma membrane or to the trans-Golgi network. The sequence is that of Clathrin heavy chain 2 (CLTCL1) from Homo sapiens (Human).